A 202-amino-acid polypeptide reads, in one-letter code: Type II restriction enzyme MunI (202 aa).

Homodimer.

It carries out the reaction Endonucleolytic cleavage of DNA to give specific double-stranded fragments with terminal 5'-phosphates.. Its function is as follows. A P subtype restriction enzyme that recognizes the double-stranded sequence 5'-CAATTG-3' and cleaves after C-1. The chain is Type II restriction enzyme MunI from Mycoplasma sp.